Reading from the N-terminus, the 231-residue chain is Small ribosomal subunit protein uS3 (231 aa).

The KH type-2 domain maps to 39-107; the sequence is IRKHIMKAIP…DVSLNIVEIR (69 aa).

This sequence belongs to the universal ribosomal protein uS3 family. Part of the 30S ribosomal subunit. Forms a tight complex with proteins S10 and S14.

In terms of biological role, binds the lower part of the 30S subunit head. Binds mRNA in the 70S ribosome, positioning it for translation. This is Small ribosomal subunit protein uS3 from Rhizorhabdus wittichii (strain DSM 6014 / CCUG 31198 / JCM 15750 / NBRC 105917 / EY 4224 / RW1) (Sphingomonas wittichii).